We begin with the raw amino-acid sequence, 96 residues long: Co-chaperonin GroES (96 aa).

It belongs to the GroES chaperonin family. As to quaternary structure, heptamer of 7 subunits arranged in a ring. Interacts with the chaperonin GroEL.

The protein localises to the cytoplasm. Functionally, together with the chaperonin GroEL, plays an essential role in assisting protein folding. The GroEL-GroES system forms a nano-cage that allows encapsulation of the non-native substrate proteins and provides a physical environment optimized to promote and accelerate protein folding. GroES binds to the apical surface of the GroEL ring, thereby capping the opening of the GroEL channel. This is Co-chaperonin GroES from Hahella chejuensis (strain KCTC 2396).